Reading from the N-terminus, the 243-residue chain is Probable transcriptional regulatory protein PTH_1024 (243 aa).

Belongs to the TACO1 family.

It localises to the cytoplasm. The polypeptide is Probable transcriptional regulatory protein PTH_1024 (Pelotomaculum thermopropionicum (strain DSM 13744 / JCM 10971 / SI)).